The chain runs to 442 residues: D-serine dehydratase (442 aa).

Lys-118 carries the N6-(pyridoxal phosphate)lysine modification.

The protein belongs to the serine/threonine dehydratase family. DsdA subfamily. In terms of assembly, monomer. Pyridoxal 5'-phosphate serves as cofactor.

The catalysed reaction is D-serine = pyruvate + NH4(+). The sequence is that of D-serine dehydratase from Escherichia coli O139:H28 (strain E24377A / ETEC).